The primary structure comprises 323 residues: Biotin synthase (323 aa).

A Radical SAM core domain is found at 46 to 264 (TEIQLSSLLS…IAVARITMPR (219 aa)). 3 residues coordinate [4Fe-4S] cluster: C61, C65, and C68. C105, C136, C196, and R268 together coordinate [2Fe-2S] cluster.

The protein belongs to the radical SAM superfamily. Biotin synthase family. Homodimer. The cofactor is [4Fe-4S] cluster. [2Fe-2S] cluster is required as a cofactor.

It catalyses the reaction (4R,5S)-dethiobiotin + (sulfur carrier)-SH + 2 reduced [2Fe-2S]-[ferredoxin] + 2 S-adenosyl-L-methionine = (sulfur carrier)-H + biotin + 2 5'-deoxyadenosine + 2 L-methionine + 2 oxidized [2Fe-2S]-[ferredoxin]. The protein operates within cofactor biosynthesis; biotin biosynthesis; biotin from 7,8-diaminononanoate: step 2/2. Catalyzes the conversion of dethiobiotin (DTB) to biotin by the insertion of a sulfur atom into dethiobiotin via a radical-based mechanism. This is Biotin synthase from Bordetella avium (strain 197N).